A 581-amino-acid polypeptide reads, in one-letter code: MLVAMNGFIDWGCLPNFNSPAVFSSILDKKKGGYFAIYPTDTHDLYVDQYYKELTNILVTEFIKNGKVILRTTDFMPDSEYGKISFPEVHRFVETFSDPVRITIDFKPAFNYATERPLIQRVQHGFIFSTEKENMGISTEFQLKKNADHVFADVDMEPRSSSWVIALYGIHHLYRPTDYKSYLRLQETTDYWRKWASNSTYSGMYHSMVMRSALALKVLFYEPTGMMVAAPTASLPEAIGGERNWDYRYTWIRDTAYVIEALATIGYKREAVSFLYDMMDVISRENKIRTIYSIDNSDDFVERELDFEGYRGSRPVRIGNKAVDQLQIDQYGSIVRAIHAMEKAGGVVNSYLWDFVEEMMAKIEYLWKYPDSSIWEFRTEPKQYVYSKVMSWAAFDSAITMARDLGLTAPIKKWKGIQDEIWNDVMTKGFDPQTNSFVQYYGSKNVDASLLRLPILGFIPANDERFIGTMKRIEDELMVDGYLFRRYREDDGLKGDEGSFLMLTFWYIEDLILMKRLKAARAALESIIEKANHLGLYSEEIDEKTGDFLGNFPQALSHLGIIRVAPKLEEAFLKRVSKINE.

This sequence belongs to the glycosyl hydrolase 15 family. In terms of assembly, monomer.

The catalysed reaction is alpha,alpha-trehalose + H2O = alpha-D-glucose + beta-D-glucose. It participates in glycan degradation; trehalose degradation; D-glucose from alpha,alpha-trehalose: step 1/1. Its activity is regulated as follows. Inhibited by validamycin A. Its function is as follows. Catalyzes the hydrolysis of alpha,alpha-trehalose into two molecules of D-glucose. The chain is Trehalase from Thermoplasma acidophilum (strain ATCC 25905 / DSM 1728 / JCM 9062 / NBRC 15155 / AMRC-C165).